The chain runs to 274 residues: Large ribosomal subunit protein uL2cz/uL2cy (274 aa).

Disordered regions lie at residues 1 to 33 (MAIHLYKTSTPSTRKRAVDSQGKSNPRNHLIYG) and 223 to 265 (MNPV…KYND).

This sequence belongs to the universal ribosomal protein uL2 family. In terms of assembly, part of the 50S ribosomal subunit.

The protein resides in the plastid. Its subcellular location is the chloroplast. This Pelargonium hortorum (Common geranium) protein is Large ribosomal subunit protein uL2cz/uL2cy (rpl2-A).